The sequence spans 536 residues: Glycine-rich extracellular protein 1 (536 aa).

Positions 1–22 are cleaved as a signal peptide; it reads MGAWAFPAALFLLCLTSESLQG. Disordered stretches follow at residues 111–134, 306–336, and 500–536; these read AQNGFGPGFGGGGKPQKPGPTTQN, GAGEGMKPQKPGLRGTLKPQKSGHGHENGPW, and GDEYAEARSQPGGPDVKRGSNGQLGNGYGGRCPLGKC. The segment covering 115–124 has biased composition (gly residues); it reads FGPGFGGGGK. Positions 521–536 are enriched in gly residues; the sequence is GQLGNGYGGRCPLGKC.

The chain is Glycine-rich extracellular protein 1 from Homo sapiens (Human).